The following is a 196-amino-acid chain: Adenylate kinase (196 aa).

9–17 is a binding site for ATP; it reads GIPGVGKST.

It belongs to the archaeal adenylate kinase family.

The protein localises to the cytoplasm. It carries out the reaction AMP + ATP = 2 ADP. This chain is Adenylate kinase, found in Thermococcus kodakarensis (strain ATCC BAA-918 / JCM 12380 / KOD1) (Pyrococcus kodakaraensis (strain KOD1)).